The following is a 316-amino-acid chain: Pantothenate kinase (316 aa).

95–102 is a binding site for ATP; that stretch reads GSVAVGKS.

This sequence belongs to the prokaryotic pantothenate kinase family.

Its subcellular location is the cytoplasm. It carries out the reaction (R)-pantothenate + ATP = (R)-4'-phosphopantothenate + ADP + H(+). It functions in the pathway cofactor biosynthesis; coenzyme A biosynthesis; CoA from (R)-pantothenate: step 1/5. This chain is Pantothenate kinase, found in Shewanella halifaxensis (strain HAW-EB4).